The chain runs to 617 residues: MASIQPAGSSAPSSNINSPILPPSGTPFFNGPLSDTNTRSSPAPASNASAQTDGPRSKRNKRDSRKKREAKGLDQEIVPAKKRATAVQNTALPSSDLNILRPLLLAEPRPSDLLPPQPRQLNLVSRKTSEVIGQSWSFYEVVDKLTNKNGFRYSYAIADTSFPHIKYRQTDVRPYNARFSFEDSPAAILFNEDALAVTTNGPWHTARANVCAREGTFYYEARIISGVLSDPQTAPANGKSCLPSRGHVRLGFARREADLDVNVGVDCYGYGIRDVNGEVVNRMRCEYFFPKGESIREGDVIGMLITLPPLSLHKRIVEGTYDPAVDGHASTSGIELSMATNVIRDRIPFHYKSDFCWQQSNVFPTKQLRDYAFNLKETPTFGPPSPMNTEDASLRTLPGSSITIFKNGIKMGTPFKELYAFLPPASRLANGTNNLGLGERENADDGMIGYYPAVSCYGGGAVECRFEGPWWIGPPQAENGEPIRGIGERFNEQIVEDVVADIVDEVEAMLVWGGVDGDVVGNAQMDGTGTGAVGGSEVLKGGVGAAYESAVSAVSAGPGTGPSTVENSVGNVGSPDVGTGHSTFEDAASVGVVGTPNTEEPAARPENITVGHDVEMS.

Composition is skewed to low complexity over residues 1–19 (MASI…INSP) and 40–50 (SSPAPASNASA). A disordered region spans residues 1 to 89 (MASIQPAGSS…AKKRATAVQN (89 aa)). Residues 57-69 (SKRNKRDSRKKRE) show a composition bias toward basic residues. A B30.2/SPRY domain is found at 157–380 (IADTSFPHIK…YAFNLKETPT (224 aa)). The interval 595 to 617 (TPNTEEPAARPENITVGHDVEMS) is disordered.

Belongs to the cclA family. As to quaternary structure, component of the COMPASS complex.

Its subcellular location is the nucleus. It is found in the chromosome. It localises to the telomere. Functionally, component of the COMPASS (Set1C) complex that specifically mono-, di- and trimethylates histone H3 to form H3K4me1/2/3, which subsequently plays a role in telomere length maintenance and transcription elongation regulation. Controls the production of several secondary metabolites, including astellolides. This is COMPASS component cclA from Aspergillus oryzae (strain ATCC 42149 / RIB 40) (Yellow koji mold).